The following is a 638-amino-acid chain: 1-deoxy-D-xylulose-5-phosphate synthase (638 aa).

Residues histidine 72 and 113–115 each bind thiamine diphosphate; that span reads GHA. Mg(2+) is bound at residue aspartate 144. Residues 145–146, asparagine 174, tyrosine 287, and glutamate 370 contribute to the thiamine diphosphate site; that span reads GA. Residue asparagine 174 coordinates Mg(2+).

This sequence belongs to the transketolase family. DXPS subfamily. In terms of assembly, homodimer. The cofactor is Mg(2+). Thiamine diphosphate serves as cofactor.

The catalysed reaction is D-glyceraldehyde 3-phosphate + pyruvate + H(+) = 1-deoxy-D-xylulose 5-phosphate + CO2. The protein operates within metabolic intermediate biosynthesis; 1-deoxy-D-xylulose 5-phosphate biosynthesis; 1-deoxy-D-xylulose 5-phosphate from D-glyceraldehyde 3-phosphate and pyruvate: step 1/1. Catalyzes the acyloin condensation reaction between C atoms 2 and 3 of pyruvate and glyceraldehyde 3-phosphate to yield 1-deoxy-D-xylulose-5-phosphate (DXP). The sequence is that of 1-deoxy-D-xylulose-5-phosphate synthase from Thermosynechococcus vestitus (strain NIES-2133 / IAM M-273 / BP-1).